A 330-amino-acid polypeptide reads, in one-letter code: Malate dehydrogenase (330 aa).

15–21 (GGTGQIA) is an NAD(+) binding site. Substrate is bound by residues R96 and R102. NAD(+)-binding positions include N109, Q116, and 133–135 (VGN). N135 and R166 together coordinate substrate. The Proton acceptor role is filled by H191.

This sequence belongs to the LDH/MDH superfamily. MDH type 2 family.

It carries out the reaction (S)-malate + NAD(+) = oxaloacetate + NADH + H(+). Its function is as follows. Catalyzes the reversible oxidation of malate to oxaloacetate. The polypeptide is Malate dehydrogenase (Chlamydia caviae (strain ATCC VR-813 / DSM 19441 / 03DC25 / GPIC) (Chlamydophila caviae)).